We begin with the raw amino-acid sequence, 403 residues long: Na(+)-translocating NADH-quinone reductase subunit B (403 aa).

Transmembrane regions (helical) follow at residues 56–76 (IMIM…YNIG), 114–134 (LAMF…TFIV), and 165–185 (LPAT…VVIA). Thr231 bears the FMN phosphoryl threonine mark. 5 helical membrane passes run 260 to 280 (GSVG…IIYM), 287 to 307 (IVLG…VIGS), 312 to 332 (MFAM…GMFF), 348 to 368 (WAYG…NPAF), and 371 to 391 (GMML…YFVA).

It belongs to the NqrB/RnfD family. In terms of assembly, composed of six subunits; NqrA, NqrB, NqrC, NqrD, NqrE and NqrF. Requires FMN as cofactor.

It is found in the cell inner membrane. The enzyme catalyses a ubiquinone + n Na(+)(in) + NADH + H(+) = a ubiquinol + n Na(+)(out) + NAD(+). In terms of biological role, NQR complex catalyzes the reduction of ubiquinone-1 to ubiquinol by two successive reactions, coupled with the transport of Na(+) ions from the cytoplasm to the periplasm. NqrA to NqrE are probably involved in the second step, the conversion of ubisemiquinone to ubiquinol. This is Na(+)-translocating NADH-quinone reductase subunit B from Pseudoalteromonas atlantica (strain T6c / ATCC BAA-1087).